The sequence spans 376 residues: Chaperone protein DnaJ (376 aa).

The J domain maps to 4 to 69; the sequence is DFYETLGVQK…QKRAAYDRFG (66 aa). The CR-type zinc finger occupies 133–211; the sequence is GKTAQIRVPA…CAGQGRVTEE (79 aa). 8 residues coordinate Zn(2+): Cys-146, Cys-149, Cys-163, Cys-166, Cys-185, Cys-188, Cys-199, and Cys-202. CXXCXGXG motif repeat units lie at residues 146–153, 163–170, 185–192, and 199–206; these read CTECSGSG, CSMCHGHG, CPQCQGRG, and CPKCAGQG.

The protein belongs to the DnaJ family. In terms of assembly, homodimer. It depends on Zn(2+) as a cofactor.

The protein localises to the cytoplasm. In terms of biological role, participates actively in the response to hyperosmotic and heat shock by preventing the aggregation of stress-denatured proteins and by disaggregating proteins, also in an autonomous, DnaK-independent fashion. Unfolded proteins bind initially to DnaJ; upon interaction with the DnaJ-bound protein, DnaK hydrolyzes its bound ATP, resulting in the formation of a stable complex. GrpE releases ADP from DnaK; ATP binding to DnaK triggers the release of the substrate protein, thus completing the reaction cycle. Several rounds of ATP-dependent interactions between DnaJ, DnaK and GrpE are required for fully efficient folding. Also involved, together with DnaK and GrpE, in the DNA replication of plasmids through activation of initiation proteins. This chain is Chaperone protein DnaJ, found in Mesorhizobium japonicum (strain LMG 29417 / CECT 9101 / MAFF 303099) (Mesorhizobium loti (strain MAFF 303099)).